The following is a 532-amino-acid chain: Probable 1,4-beta-D-glucan cellobiohydrolase B (532 aa).

A signal peptide spans 1–26 (MLASTFSYRMYKTALILAALLGSGQA). The interval 27 to 461 (QQVGTSQAEV…SNIKVGPIGS (435 aa)) is catalytic. The Nucleophile role is filled by Glu238. The active-site Proton donor is the Glu243. N-linked (GlcNAc...) asparagine glycosylation occurs at Asn296. A disordered region spans residues 462 to 495 (TFNSGGSNPGGGTTTTTTTQPTTTTTTAGNPGGT). Residues 462-496 (TFNSGGSNPGGGTTTTTTTQPTTTTTTAGNPGGTG) are thr-rich linker. Over residues 475–490 (TTTTTTQPTTTTTTAG) the composition is skewed to low complexity. The region spanning 496–532 (GVAQHYGQCGGIGWTGPTTCASPYTCQKLNDYYSQCL) is the CBM1 domain. 2 cysteine pairs are disulfide-bonded: Cys504/Cys521 and Cys515/Cys531.

Belongs to the glycosyl hydrolase 7 (cellulase C) family.

It is found in the secreted. The enzyme catalyses Hydrolysis of (1-&gt;4)-beta-D-glucosidic linkages in cellulose and cellotetraose, releasing cellobiose from the non-reducing ends of the chains.. Functionally, the biological conversion of cellulose to glucose generally requires three types of hydrolytic enzymes: (1) Endoglucanases which cut internal beta-1,4-glucosidic bonds; (2) Exocellobiohydrolases that cut the disaccharide cellobiose from the non-reducing end of the cellulose polymer chain; (3) Beta-1,4-glucosidases which hydrolyze the cellobiose and other short cello-oligosaccharides to glucose. This chain is Probable 1,4-beta-D-glucan cellobiohydrolase B (cbhB), found in Aspergillus fumigatus (strain CBS 144.89 / FGSC A1163 / CEA10) (Neosartorya fumigata).